We begin with the raw amino-acid sequence, 477 residues long: Asparaginyl-tRNA synthetase (477 aa).

The transit peptide at 1–14 (MLGARRLLGALRLC) directs the protein to the mitochondrion. Position 353 is an N6-acetyllysine (K353).

The protein belongs to the class-II aminoacyl-tRNA synthetase family. In terms of assembly, homodimer. As to expression, expressed in brain and inner ear, including the cochlear epithelium and organ of Corti.

The protein localises to the mitochondrion matrix. The protein resides in the mitochondrion. The enzyme catalyses tRNA(Asn) + L-asparagine + ATP = L-asparaginyl-tRNA(Asn) + AMP + diphosphate + H(+). Mitochondrial aminoacyl-tRNA synthetase that catalyzes the specific attachment of the asparagine amino acid (aa) to the homologous transfer RNA (tRNA), further participating in protein synthesis. The reaction occurs in a two steps: asparagine is first activated by ATP to form Asn-AMP and then transferred to the acceptor end of tRNA(Asn). In Mus musculus (Mouse), this protein is Asparaginyl-tRNA synthetase.